Here is a 298-residue protein sequence, read N- to C-terminus: Probable endonuclease 4 (298 aa).

Positions 69, 111, 146, 180, 183, 215, 228, 230, and 260 each coordinate Zn(2+).

It belongs to the AP endonuclease 2 family. It depends on Zn(2+) as a cofactor.

The enzyme catalyses Endonucleolytic cleavage to 5'-phosphooligonucleotide end-products.. Functionally, endonuclease IV plays a role in DNA repair. It cleaves phosphodiester bonds at apurinic or apyrimidinic (AP) sites, generating a 3'-hydroxyl group and a 5'-terminal sugar phosphate. The polypeptide is Probable endonuclease 4 (Bacillus cereus (strain G9842)).